Here is a 219-residue protein sequence, read N- to C-terminus: NADH-quinone oxidoreductase subunit C (219 aa).

It belongs to the complex I 30 kDa subunit family. As to quaternary structure, NDH-1 is composed of 14 different subunits. Subunits NuoB, C, D, E, F, and G constitute the peripheral sector of the complex.

Its subcellular location is the cell inner membrane. The catalysed reaction is a quinone + NADH + 5 H(+)(in) = a quinol + NAD(+) + 4 H(+)(out). NDH-1 shuttles electrons from NADH, via FMN and iron-sulfur (Fe-S) centers, to quinones in the respiratory chain. The immediate electron acceptor for the enzyme in this species is believed to be ubiquinone. Couples the redox reaction to proton translocation (for every two electrons transferred, four hydrogen ions are translocated across the cytoplasmic membrane), and thus conserves the redox energy in a proton gradient. The polypeptide is NADH-quinone oxidoreductase subunit C (Methylorubrum populi (strain ATCC BAA-705 / NCIMB 13946 / BJ001) (Methylobacterium populi)).